The primary structure comprises 138 residues: Photosystem II extrinsic protein U (138 aa).

An N-terminal signal peptide occupies residues 1–28 (MSRVVSALMGLVLMFGCAFFSVQPQAQA). Positions 29–42 (LDLSNGFVSAAVLG) are excised as a propeptide.

The protein belongs to the PsbU family. In terms of assembly, PSII is composed of 1 copy each of membrane proteins PsbA, PsbB, PsbC, PsbD, PsbE, PsbF, PsbH, PsbI, PsbJ, PsbK, PsbL, PsbM, PsbT, PsbX, PsbY, PsbZ, Psb30/Ycf12, peripheral proteins PsbO, CyanoQ (PsbQ), PsbU, PsbV and a large number of cofactors. It forms dimeric complexes.

It is found in the cellular thylakoid membrane. One of the extrinsic, lumenal subunits of photosystem II (PSII). PSII is a light-driven water plastoquinone oxidoreductase, using light energy to abstract electrons from H(2)O, generating a proton gradient subsequently used for ATP formation. The extrinsic proteins stabilize the structure of photosystem II oxygen-evolving complex (OEC), the ion environment of oxygen evolution and protect the OEC against heat-induced inactivation. The sequence is that of Photosystem II extrinsic protein U from Picosynechococcus sp. (strain ATCC 27264 / PCC 7002 / PR-6) (Agmenellum quadruplicatum).